We begin with the raw amino-acid sequence, 83 residues long: Apolipoprotein C-I, acidic form (83 aa).

Positions 1–26 (MRLFLSLPVLVVVLSMVLEGPAPAQG) are cleaved as a signal peptide.

This sequence belongs to the apolipoprotein C1 family.

Its subcellular location is the secreted. The sequence is that of Apolipoprotein C-I, acidic form (APOC1A) from Gorilla gorilla gorilla (Western lowland gorilla).